The sequence spans 969 residues: UvrABC system protein A (969 aa).

32-39 (GLSGSGKS) contributes to the ATP binding site. The segment at 258-286 (CPNGHPLAVDDLEPRSFSFNSPYGACPEC) adopts a C4-type zinc-finger fold. ABC transporter domains are found at residues 316–599 (WSAG…KDSI) and 619–948 (VDRK…KFLA). 652–659 (GVSGSGKS) contacts ATP. The segment at 751 to 777 (CEACTGDGTIKIEMNFLPDVYVPCEVC) adopts a C4-type zinc-finger fold.

The protein belongs to the ABC transporter superfamily. UvrA family. In terms of assembly, forms a heterotetramer with UvrB during the search for lesions.

It localises to the cytoplasm. In terms of biological role, the UvrABC repair system catalyzes the recognition and processing of DNA lesions. UvrA is an ATPase and a DNA-binding protein. A damage recognition complex composed of 2 UvrA and 2 UvrB subunits scans DNA for abnormalities. When the presence of a lesion has been verified by UvrB, the UvrA molecules dissociate. This Mycobacterium leprae (strain TN) protein is UvrABC system protein A.